A 61-amino-acid polypeptide reads, in one-letter code: Large ribosomal subunit protein bL32 (61 aa).

Over residues 1 to 16 (MAVPKRKTSPSKRGMR) the composition is skewed to basic residues. Residues 1–61 (MAVPKRKTSP…RQVLTPKESA (61 aa)) form a disordered region. Basic and acidic residues predominate over residues 28–44 (VEDKNSGELRRPHHIDL).

Belongs to the bacterial ribosomal protein bL32 family.

This is Large ribosomal subunit protein bL32 from Rhizobium etli (strain CIAT 652).